A 626-amino-acid chain; its full sequence is Leucine-rich repeat and fibronectin type-III domain-containing protein 3 (626 aa).

The N-terminal stretch at 1–16 (MAVLPLLLCLLPLAPA) is a signal peptide. Over 17-539 (SSPPQPATSS…PHAPFLGGTM (523 aa)) the chain is Extracellular. The 41-residue stretch at 19–59 (PPQPATSSPCPRRCRCQTQSLPLSVLCPGAGLLFVPPSLDR) folds into the LRRNT domain. LRR repeat units lie at residues 84-105 (GLLH…AFAD), 108-129 (ALRA…QLRG), 132-153 (NLRH…ALDD), 157-178 (TLED…ALGR), 181-202 (NVNT…AFSR), and 205-226 (KLAR…PLFS). The 47-residue stretch at 249-295 (NPLHCNCELVWLRRLAREDDLEACASPPALGGRYFWAVGEEEFVCEP) folds into the LRRCT domain. The region spanning 295 to 382 (PPVVTHRSPP…GEATAAVELT (88 aa)) is the Ig-like domain. The 88-residue stretch at 308-395 (PAGRPAALRC…PPPPQLANST (88 aa)) folds into the Fibronectin type-III 1 domain. Cys317 and Cys366 are oxidised to a cystine. Residues Asn339, Asn348, and Asn393 are each glycosylated (N-linked (GlcNAc...) asparagine). Positions 382–423 (TVGPPPPPQLANSTSCDPPRDGEPDALTPPSAASASAKVADT) are disordered. Low complexity predominate over residues 406-423 (DALTPPSAASASAKVADT). The 99-residue stretch at 425–523 (APTDRGVQVT…GCARFSTEPA (99 aa)) folds into the Fibronectin type-III 2 domain. Residues 540 to 560 (IIALGGVIVASVLVFIFVLLL) traverse the membrane as a helical segment. The Cytoplasmic portion of the chain corresponds to 561–626 (RYKVHGVQPP…WGPSHEPAGP (66 aa)).

This sequence belongs to the LRFN family. As to quaternary structure, can form heteromeric complexes with LRFN1, LRFN2, LRFN4 and LRFN5. Able to form homomeric complexes across cell junctions, between adjacent cells. Does not interact with DLG4. In terms of processing, N-glycosylated. Expressed in brain. Within brain, expressed in hippocampus, cerebellum, olfactory bulb and forebrain (at protein level).

The protein resides in the cell membrane. Its subcellular location is the cell projection. The protein localises to the axon. It localises to the dendrite. It is found in the synapse. The protein resides in the presynaptic cell membrane. Its subcellular location is the postsynaptic cell membrane. Its function is as follows. Cell adhesion molecule that mediates homophilic cell-cell adhesion in a Ca(2+)-independent manner. Promotes neurite outgrowth in hippocampal neurons. The protein is Leucine-rich repeat and fibronectin type-III domain-containing protein 3 of Rattus norvegicus (Rat).